The sequence spans 440 residues: Ultraviolet-B receptor UVR8 (440 aa).

Alanine 2 carries the N-acetylalanine modification. RCC1 repeat units lie at residues 2-31, 32-84, 86-137, 139-189, 190-241, 243-293, 294-345, and 347-399; these read AEDM…VALL, SGDI…AYSQ, GMEV…AVTM, GEVQ…AVTE, DGDL…SVSY, GALY…ALTS, DGKL…AVTE, and NNVF…SGKS. The tract at residues 397–423 is required for interaction with COP1; that stretch reads GKSWVSPAERYAVVPDETGLTDGSSKG. The tract at residues 413–440 is disordered; it reads ETGLTDGSSKGNGGDISVPQTDVKRVRI.

As to quaternary structure, homodimer in the absence of UV-B, but absorption of UV-B induces monomerization of UVR8 and interaction with COP1. Interacts with RUP1, RUP2 and histone H2B.

It localises to the nucleus. The protein localises to the cytoplasm. The protein resides in the cytosol. Its function is as follows. UV-B specific signaling component that acts as a UV-B photoreceptor and plays a key role in establishing UV-protective responses in plants. Upon UV-B irradiation, UVR8 undergoes an immediate switch from homodimer to monomer, accumulates in the nucleus, interacts with the photomorphogenic repressor COP1 and regulates the expression of the transcription factor HY5 by associating with chromatin (through histone H2B binding) in the HY5 promoter region. UVR8 is involved in controlling aspects of leaf growth and morphogenesis in response to UV-B, is required for normal progression of endocycle and has a regulatory role in stomatal differentiation. Is required for plant circadian clock response to photomorphogenic UV-B light, partly through the transcriptional activation of responsive clock genes. Promotes photosynthetic efficiency at elevated levels of UV-B. Plays a role in mediating the effects of UV-B radiation on pathogen resistance by controlling the expression of the sinapate biosynthetic pathway. The two tryptophans, Trp-285 and Trp-233, serve collectively as the UV-B chromophore. The protein is Ultraviolet-B receptor UVR8 of Arabidopsis thaliana (Mouse-ear cress).